The sequence spans 468 residues: Pentatricopeptide repeat-containing protein At5g46680 (468 aa).

PPR repeat units follow at residues 12–46, 47–81, 82–116, 117–152, 153–183, 187–221, 222–256, 257–291, 293–327, 328–362, 363–393, and 394–428; these read STKL…GVLP, DVIT…GIEP, DVTT…GLSP, DMWS…GLVP, GIDT…LKSR, ELMT…GYTP, NAVT…GYTF, DGFA…GTRS, DIVS…GLKP, DDYT…GMQP, SVVT…MEVR, and DEFT…GMKI.

It belongs to the PPR family. P subfamily.

This chain is Pentatricopeptide repeat-containing protein At5g46680, found in Arabidopsis thaliana (Mouse-ear cress).